The following is a 111-amino-acid chain: UPF0060 membrane protein NFA_36830 (111 aa).

Helical transmembrane passes span 7–27 (LVLF…VWQG), 33–53 (GLWW…VATF), 62–82 (VLAA…VLVD), and 91–111 (LLGA…PRGG).

The protein belongs to the UPF0060 family.

Its subcellular location is the cell membrane. This Nocardia farcinica (strain IFM 10152) protein is UPF0060 membrane protein NFA_36830.